The following is a 413-amino-acid chain: Putative acid phosphatase 11 (413 aa).

The Nucleophile role is filled by His-35. The Proton donor role is filled by Asp-315. A disulfide bridge connects residues Cys-381 and Cys-387.

Belongs to the histidine acid phosphatase family.

It catalyses the reaction a phosphate monoester + H2O = an alcohol + phosphate. The chain is Putative acid phosphatase 11 (pho-11) from Caenorhabditis elegans.